A 151-amino-acid chain; its full sequence is Cell division protein SepF (151 aa).

The tract at residues 31–53 is disordered; the sequence is EEVEEPRRRSRTGVKQERETGQN.

Belongs to the SepF family. As to quaternary structure, homodimer. Interacts with FtsZ.

It is found in the cytoplasm. Functionally, cell division protein that is part of the divisome complex and is recruited early to the Z-ring. Probably stimulates Z-ring formation, perhaps through the cross-linking of FtsZ protofilaments. Its function overlaps with FtsA. The protein is Cell division protein SepF of Halalkalibacterium halodurans (strain ATCC BAA-125 / DSM 18197 / FERM 7344 / JCM 9153 / C-125) (Bacillus halodurans).